A 269-amino-acid polypeptide reads, in one-letter code: Glutamate racemase (269 aa).

Substrate contacts are provided by residues 7-8 (DS) and 39-40 (YG). Residue Cys-70 is the Proton donor/acceptor of the active site. Position 71–72 (71–72 (NT)) interacts with substrate. The active-site Proton donor/acceptor is the Cys-194. 195-196 (TH) is a substrate binding site.

Belongs to the aspartate/glutamate racemases family.

It catalyses the reaction L-glutamate = D-glutamate. Its pathway is cell wall biogenesis; peptidoglycan biosynthesis. Its function is as follows. Provides the (R)-glutamate required for cell wall biosynthesis. The polypeptide is Glutamate racemase (Ruegeria sp. (strain TM1040) (Silicibacter sp.)).